A 440-amino-acid chain; its full sequence is Xaa-Pro dipeptidase (440 aa).

Aspartate 244, aspartate 255, histidine 335, glutamate 380, and glutamate 419 together coordinate Mn(2+).

The protein belongs to the peptidase M24B family. Bacterial-type prolidase subfamily. Requires Mn(2+) as cofactor.

The enzyme catalyses Xaa-L-Pro dipeptide + H2O = an L-alpha-amino acid + L-proline. In terms of biological role, splits dipeptides with a prolyl residue in the C-terminal position. The chain is Xaa-Pro dipeptidase from Shewanella baltica (strain OS185).